A 190-amino-acid polypeptide reads, in one-letter code: Dual specificity protein phosphatase 21 (190 aa).

Residues 21–162 (SFSQITRSLF…LINYEFKLFN (142 aa)) form the Tyrosine-protein phosphatase domain. Residues 43 to 128 (LSSNRITAIV…AYLMKYHSMS (86 aa)) form a sufficient for mitochondrial localization region. Residue Cys-106 is the Phosphocysteine intermediate of the active site.

This sequence belongs to the protein-tyrosine phosphatase family. Non-receptor class dual specificity subfamily. As to quaternary structure, microtubule inner protein component of sperm flagellar doublet microtubules. In terms of tissue distribution, expressed in testis.

The protein localises to the cytoplasm. The protein resides in the nucleus. Its subcellular location is the mitochondrion inner membrane. It localises to the cytoskeleton. It is found in the flagellum axoneme. The catalysed reaction is O-phospho-L-tyrosyl-[protein] + H2O = L-tyrosyl-[protein] + phosphate. It catalyses the reaction O-phospho-L-seryl-[protein] + H2O = L-seryl-[protein] + phosphate. The enzyme catalyses O-phospho-L-threonyl-[protein] + H2O = L-threonyl-[protein] + phosphate. Its function is as follows. Protein phosphatase component of the sperm flagellar doublet microtubules. May act as a regulator of sperm motility by mediating dephosphorylation of sperm doublet microtubule proteins. Can dephosphorylate single and diphosphorylated synthetic MAPK peptides, with preference for the phosphotyrosine and diphosphorylated forms over phosphothreonine. This is Dual specificity protein phosphatase 21 (DUSP21) from Homo sapiens (Human).